The sequence spans 1488 residues: Putative E3 ubiquitin-protein ligase LIN (1488 aa).

3 disordered regions span residues 297-330 (GFSM…EQSS), 351-414 (YDAS…PLRR), and 432-500 (IVSD…SSSS). Basic and acidic residues predominate over residues 366–380 (EPKKNIKDEDVEPKV). The segment covering 382–411 (RSNQKNQMNSPNISPMESPRRASNYSSTNP) has biased composition (polar residues). Positions 432–444 (IVSDHSLSSSPDT) are enriched in low complexity. A compositionally biased stretch (polar residues) spans 468 to 486 (SQTPSMNQDNENSLVLNDS). The U-box domain occupies 512–587 (KPPKDFVCPI…VSWKEQNPEL (76 aa)). 4 WD repeats span residues 1207–1244 (SSNG…PRVI), 1249–1290 (EHKK…DVYD), 1412–1451 (SLST…RVAS), and 1456–1488 (GGNT…WALD).

Expressed in roots and nodules.

The catalysed reaction is S-ubiquitinyl-[E2 ubiquitin-conjugating enzyme]-L-cysteine + [acceptor protein]-L-lysine = [E2 ubiquitin-conjugating enzyme]-L-cysteine + N(6)-ubiquitinyl-[acceptor protein]-L-lysine.. It participates in protein modification; protein ubiquitination. Putative E3 ubiquitin ligase involved in the rhizobial infection process. Plays an important role in the early steps of bacterial symbiont thread formation in roots, and in growth, differentiation and maintenance of nodules. This chain is Putative E3 ubiquitin-protein ligase LIN, found in Medicago truncatula (Barrel medic).